A 503-amino-acid chain; its full sequence is AMP phosphorylase (503 aa).

Residues Gly-168, 194-199 (SRAITS), and Thr-203 each bind AMP. The active-site Proton donor is Asp-256. AMP is bound by residues Ser-264 and Lys-288.

The protein belongs to the thymidine/pyrimidine-nucleoside phosphorylase family. Type 2 subfamily.

It catalyses the reaction AMP + phosphate = alpha-D-ribose 1,5-bisphosphate + adenine. The catalysed reaction is CMP + phosphate = cytosine + alpha-D-ribose 1,5-bisphosphate. It carries out the reaction UMP + phosphate = alpha-D-ribose 1,5-bisphosphate + uracil. In terms of biological role, catalyzes the conversion of AMP and phosphate to adenine and ribose 1,5-bisphosphate (R15P). Exhibits phosphorylase activity toward CMP and UMP in addition to AMP. Functions in an archaeal AMP degradation pathway, together with R15P isomerase and RubisCO. The chain is AMP phosphorylase from Pyrococcus horikoshii (strain ATCC 700860 / DSM 12428 / JCM 9974 / NBRC 100139 / OT-3).